Here is a 627-residue protein sequence, read N- to C-terminus: Xaa-Pro aminopeptidase 1 (627 aa).

R88 and H405 together coordinate a peptide. 3 residues coordinate Mn(2+): D424, D435, and H498. 3 residues coordinate a peptide: H498, H507, and E533. Mn(2+) is bound by residues E533 and E547.

This sequence belongs to the peptidase M24B family. As to quaternary structure, homodimer. Mn(2+) is required as a cofactor.

It is found in the cytoplasm. The protein resides in the cytosol. The catalysed reaction is Release of any N-terminal amino acid, including proline, that is linked to proline, even from a dipeptide or tripeptide.. In terms of biological role, metalloaminopeptidase that catalyzes the removal of a penultimate prolyl residue from the N-termini of peptides, such as Arg-Pro-Pro. The sequence is that of Xaa-Pro aminopeptidase 1 (xpnpep1) from Dictyostelium discoideum (Social amoeba).